A 694-amino-acid polypeptide reads, in one-letter code: Proprotein convertase subtilisin/kexin type 9 (694 aa).

Positions 1-34 (MGTHCSAWLRWPLLPLLPPLLLLLLLLCPTGAGA) are cleaved as a signal peptide. Residues 35-155 (QDEDGDYEEL…IEEDSFVFAQ (121 aa)) constitute a propeptide that is removed on maturation. Tyr-41 is subject to Sulfotyrosine. A Phosphoserine modification is found at Ser-50. The region spanning 158–470 (PWNLERIIPA…RTVWSAHSGP (313 aa)) is the Peptidase S8 domain. Active-site charge relay system residues include Asp-189 and His-229. 2 disulfide bridges follow: Cys-226-Cys-258 and Cys-326-Cys-361. Ser-389 (charge relay system) is an active-site residue. The segment at 453–694 (ETGGQLLCRT…RPSAKASWVQ (242 aa)) is C-terminal domain. 3 cysteine pairs are disulfide-bonded: Cys-460/Cys-530, Cys-480/Cys-529, and Cys-489/Cys-512. The Cell attachment site motif lies at 499 to 501 (RGD). Asn-536 carries N-linked (GlcNAc...) asparagine glycosylation. Intrachain disulfides connect Cys-537/Cys-604, Cys-555/Cys-603, Cys-565/Cys-591, Cys-611/Cys-682, Cys-629/Cys-681, and Cys-638/Cys-657. Ser-691 is modified (phosphoserine).

Belongs to the peptidase S8 family. Monomer. Can self-associate to form dimers and higher multimers which may have increased LDLR degrading activity. The precursor protein but not the mature protein may form multimers. Interacts with APOB, VLDLR, LRP8/APOER2 and BACE1. The full-length immature form (pro-PCSK9) interacts with SCNN1A, SCNN1B and SCNN1G. The pro-PCSK9 form (via C-terminal domain) interacts with LDLR. Interacts (via the C-terminal domain) with ANXA2 (via repeat Annexin 1); the interaction inhibits the degradation of LDLR. The cofactor is Ca(2+). Cleavage by furin and PCSK5 generates a truncated inactive protein that is unable to induce LDLR degradation. In terms of processing, undergoes autocatalytic cleavage in the endoplasmic reticulum to release the propeptide from the N-terminus and the cleavage of the propeptide is strictly required for its maturation and activation. The cleaved propeptide however remains associated with the catalytic domain through non-covalent interactions, preventing potential substrates from accessing its active site. As a result, it is secreted from cells as a propeptide-containing, enzymatically inactive protein. Post-translationally, phosphorylation protects the propeptide against proteolysis. Hepatocytes, kidney mesenchymal cells, intestinal ileum, colon epithelia and embryonic brain telencephalon neurons.

Its subcellular location is the cytoplasm. The protein localises to the secreted. The protein resides in the endosome. It localises to the lysosome. It is found in the cell surface. Its subcellular location is the endoplasmic reticulum. The protein localises to the golgi apparatus. With respect to regulation, its proteolytic activity is autoinhibited by the non-covalent binding of the propeptide to the catalytic domain. Inhibited by EGTA. Crucial player in the regulation of plasma cholesterol homeostasis. Binds to low-density lipid receptor family members: low density lipoprotein receptor (LDLR), very low density lipoprotein receptor (VLDLR), apolipoprotein E receptor (LRP1/APOER) and apolipoprotein receptor 2 (LRP8/APOER2), and promotes their degradation in intracellular acidic compartments. Acts via a non-proteolytic mechanism to enhance the degradation of the hepatic LDLR through a clathrin LDLRAP1/ARH-mediated pathway. May prevent the recycling of LDLR from endosomes to the cell surface or direct it to lysosomes for degradation. Can induce ubiquitination of LDLR leading to its subsequent degradation. Inhibits intracellular degradation of APOB via the autophagosome/lysosome pathway in a LDLR-independent manner. Involved in the disposal of non-acetylated intermediates of BACE1 in the early secretory pathway. Inhibits epithelial Na(+) channel (ENaC)-mediated Na(+) absorption by reducing ENaC surface expression primarily by increasing its proteasomal degradation. Regulates neuronal apoptosis via modulation of LRP8/APOER2 levels and related anti-apoptotic signaling pathways. This is Proprotein convertase subtilisin/kexin type 9 (Pcsk9) from Mus musculus (Mouse).